Reading from the N-terminus, the 208-residue chain is dITP/XTP pyrophosphatase (208 aa).

11–16 (SRNWKK) contributes to the substrate binding site. The active-site Proton acceptor is Asp-76. Asp-76 serves as a coordination point for Mg(2+). Residues Ser-77, 158-161 (FGYD), Lys-184, and 189-190 (HR) each bind substrate.

This sequence belongs to the HAM1 NTPase family. Homodimer. Mg(2+) serves as cofactor.

It catalyses the reaction XTP + H2O = XMP + diphosphate + H(+). The catalysed reaction is dITP + H2O = dIMP + diphosphate + H(+). It carries out the reaction ITP + H2O = IMP + diphosphate + H(+). Its function is as follows. Pyrophosphatase that catalyzes the hydrolysis of nucleoside triphosphates to their monophosphate derivatives, with a high preference for the non-canonical purine nucleotides XTP (xanthosine triphosphate), dITP (deoxyinosine triphosphate) and ITP. Seems to function as a house-cleaning enzyme that removes non-canonical purine nucleotides from the nucleotide pool, thus preventing their incorporation into DNA/RNA and avoiding chromosomal lesions. This is dITP/XTP pyrophosphatase from Mycobacterium leprae (strain TN).